Here is a 90-residue protein sequence, read N- to C-terminus: Small ribosomal subunit protein bS16 (90 aa).

The protein belongs to the bacterial ribosomal protein bS16 family. In terms of assembly, part of the 30S ribosomal subunit.

The polypeptide is Small ribosomal subunit protein bS16 (Bacillus subtilis (strain 168)).